A 758-amino-acid chain; its full sequence is EMILIN-3 (758 aa).

Positions M1–A21 are cleaved as a signal peptide. Residues H54–E130 enclose the EMI domain. Disulfide bonds link C58/C120, C85/C91, and C119/C128. A glycan (N-linked (GlcNAc...) asparagine) is linked at N65. Residues H131 to F178 form a disordered region. Residues S379–T401 adopt a coiled-coil conformation. A glycan (N-linked (GlcNAc...) asparagine) is linked at N436. 2 coiled-coil regions span residues G460–P483 and A528–E567. N555 and N609 each carry an N-linked (GlcNAc...) asparagine glycan. 2 coiled-coil regions span residues R642–H677 and H720–R753. N725 carries an N-linked (GlcNAc...) asparagine glycan.

Its subcellular location is the secreted. The protein localises to the extracellular space. The protein resides in the extracellular matrix. It is found in the cytoplasm. The sequence is that of EMILIN-3 (Emilin3) from Mus musculus (Mouse).